Reading from the N-terminus, the 573-residue chain is MLFIDFCKILDKIEKTTKRLEKTDYFVELIDFIKNNGKAENLKQVSQITIGRVFAEFENKEIGIGPNLLIEAVKTTGISEKDLKAEIKKTGDIGIAVENLSSNIKQVSLFSQPLTLEEIYSTLKKLSEIEGNSSQKKKTRIISNLLILSNPVESRYISRLILEDMRIGMNIPTILASFSNYFNVNKEAVEKIYAVTNDIGLIGKKLISGSDIENDSELKLKVFRPIKPMLAQLTPSIEDAIIETKMPQFETKYDGARVQVHKSNGKVNIYSRRLENITNSVPELVEEINKIDIDNIILEGECVAMDLSSGKPRPFQDILRRFRRKYDIDKVAEKIALRIYFFDVLYYEKGLIDTPLKNRREILEKLFGTNNWDSELEKIQKEIFSNKMLFSSFKLNSDDPDLAKEFFNWSLSIGHEGIMIKNPDAPYTPGSRVKTMYKVKPTLENLDVVVTRAKIGMGKRKDWYGSYEISVKDDEDNLHVIGNVGSGLTEDDLERLTTIVNEIKIEDLGEEVILEPKIVLEVTYEEIQTSEKYEMGYALRFPRVVQIREDKSINDINTLDDVKKIYEIERNRK.

Glu250 serves as a coordination point for ATP. Catalysis depends on Lys252, which acts as the N6-AMP-lysine intermediate. Residues Arg257, Arg272, Glu301, Phe342, Arg432, and Lys438 each contribute to the ATP site.

It belongs to the ATP-dependent DNA ligase family. Mg(2+) serves as cofactor.

The catalysed reaction is ATP + (deoxyribonucleotide)n-3'-hydroxyl + 5'-phospho-(deoxyribonucleotide)m = (deoxyribonucleotide)n+m + AMP + diphosphate.. Functionally, DNA ligase that seals nicks in double-stranded DNA during DNA replication, DNA recombination and DNA repair. The chain is DNA ligase from Methanococcus maripaludis (strain C6 / ATCC BAA-1332).